Reading from the N-terminus, the 223-residue chain is Cell division protein SepF (223 aa).

The disordered stretch occupies residues 19-81 (YDDEYYDDRG…YPPPGGYRGG (63 aa)). Residues 36-69 (PRFEDDYGRYEGRDFEDPRRDPRAGMRADLRGEP) are compositionally biased toward basic and acidic residues.

The protein belongs to the SepF family. In terms of assembly, homodimer. Interacts with FtsZ.

Its subcellular location is the cytoplasm. Functionally, cell division protein that is part of the divisome complex and is recruited early to the Z-ring. Probably stimulates Z-ring formation, perhaps through the cross-linking of FtsZ protofilaments. Its function overlaps with FtsA. The protein is Cell division protein SepF of Mycobacterium ulcerans (strain Agy99).